A 286-amino-acid polypeptide reads, in one-letter code: NADH-cytochrome b5 reductase 1 (286 aa).

A helical membrane pass occupies residues F6–L26. Residues Q52–Q155 enclose the FAD-binding FR-type domain. FAD contacts are provided by residues D135 to G150 and S161 to L193.

Belongs to the flavoprotein pyridine nucleotide cytochrome reductase family. Monomer. It depends on FAD as a cofactor.

Its subcellular location is the endoplasmic reticulum membrane. It localises to the mitochondrion outer membrane. It carries out the reaction 2 Fe(III)-[cytochrome b5] + NADH = 2 Fe(II)-[cytochrome b5] + NAD(+) + H(+). Its function is as follows. Electron donor reductase for cytochrome b5. The cytochrome b5/NADH cytochrome b5 reductase electron transfer system supports the catalytic activity of several sterol biosynthetic enzymes. The sequence is that of NADH-cytochrome b5 reductase 1 (cyb5r1) from Dictyostelium discoideum (Social amoeba).